The chain runs to 251 residues: Flap endonuclease Xni (251 aa).

Position 104 (aspartate 104) interacts with Mg(2+). Residues 160–249 (VLPRQLPDYW…IDGNLQQLRL (90 aa)) enclose the 5'-3' exonuclease domain. Leucine 171, alanine 172, proline 180, valine 182, and isoleucine 185 together coordinate K(+). The interval 184-189 (GIGPKS) is interaction with DNA.

It belongs to the Xni family. Requires Mg(2+) as cofactor. K(+) serves as cofactor.

In terms of biological role, has flap endonuclease activity. During DNA replication, flap endonucleases cleave the 5'-overhanging flap structure that is generated by displacement synthesis when DNA polymerase encounters the 5'-end of a downstream Okazaki fragment. The protein is Flap endonuclease Xni of Salmonella paratyphi A (strain ATCC 9150 / SARB42).